We begin with the raw amino-acid sequence, 126 residues long: Histone H2B type 1-N (126 aa).

Residues 1–12 (MPEPSKSAPAPK) are compositionally biased toward low complexity. The interval 1 to 36 (MPEPSKSAPAPKKGSKKAVTKAQKKDGKKRKRSRKE) is disordered. N-acetylproline is present on Pro-2. At Glu-3 the chain carries ADP-ribosyl glutamic acid. Lys-6 carries the N6-(2-hydroxyisobutyryl)lysine; alternate modification. Lys-6 is modified (N6-(beta-hydroxybutyryl)lysine; alternate). Lys-6 carries the post-translational modification N6-acetyllysine; alternate. Lys-6 bears the N6-butyryllysine; alternate mark. N6-crotonyllysine; alternate is present on Lys-6. An N6-lactoyllysine; alternate modification is found at Lys-6. Residue Lys-6 forms a Glycyl lysine isopeptide (Lys-Gly) (interchain with G-Cter in SUMO2); alternate linkage. Ser-7 is subject to ADP-ribosylserine. Position 12 is an N6-(beta-hydroxybutyryl)lysine; alternate (Lys-12). Residues Lys-12 and Lys-13 each carry the N6-acetyllysine; alternate modification. Residues Lys-12 and Lys-13 each carry the N6-crotonyllysine; alternate modification. Lys-12 bears the N6-lactoyllysine; alternate mark. N6-(2-hydroxyisobutyryl)lysine; alternate is present on Lys-13. Ser-15 carries the phosphoserine; by STK4/MST1 modification. Residues Lys-16, Lys-17, Lys-21, and Lys-24 each carry the N6-acetyllysine; alternate modification. N6-crotonyllysine; alternate occurs at positions 16, 17, 21, and 24. An N6-lactoyllysine; alternate mark is found at Lys-16, Lys-17, Lys-21, and Lys-24. The residue at position 17 (Lys-17) is an N6-glutaryllysine; alternate. Residues Lys-21 and Lys-24 each carry the N6-(2-hydroxyisobutyryl)lysine; alternate modification. An N6-(beta-hydroxybutyryl)lysine; alternate modification is found at Lys-21. The residue at position 21 (Lys-21) is an N6-butyryllysine; alternate. Lys-21 is covalently cross-linked (Glycyl lysine isopeptide (Lys-Gly) (interchain with G-Cter in SUMO2); alternate). At Lys-25 the chain carries N6-(2-hydroxyisobutyryl)lysine. At Lys-35 the chain carries N6-(2-hydroxyisobutyryl)lysine; alternate. Position 35 is an N6-(beta-hydroxybutyryl)lysine; alternate (Lys-35). At Lys-35 the chain carries N6-crotonyllysine; alternate. Residue Lys-35 is modified to N6-glutaryllysine; alternate. At Lys-35 the chain carries N6-succinyllysine; alternate. Lys-35 participates in a covalent cross-link: Glycyl lysine isopeptide (Lys-Gly) (interchain with G-Cter in ubiquitin); alternate. The residue at position 36 (Glu-36) is a PolyADP-ribosyl glutamic acid. Ser-37 is subject to Phosphoserine; by AMPK. 3 positions are modified to N6-(2-hydroxyisobutyryl)lysine; alternate: Lys-44, Lys-47, and Lys-58. At Lys-44 the chain carries N6-lactoyllysine; alternate. N6-glutaryllysine; alternate is present on residues Lys-44 and Lys-47. Residue Lys-47 is modified to N6-methyllysine; alternate. Lys-58 bears the N6,N6-dimethyllysine; alternate mark. Arg-80 bears the Dimethylated arginine mark. An N6-(2-hydroxyisobutyryl)lysine; alternate modification is found at Lys-86. An N6-acetyllysine; alternate modification is found at Lys-86. An N6-lactoyllysine; alternate modification is found at Lys-86. Lys-86 bears the N6,N6,N6-trimethyllysine; alternate mark. Omega-N-methylarginine is present on residues Arg-87 and Arg-93. Lys-109 carries the N6-(2-hydroxyisobutyryl)lysine; alternate modification. Lys-109 carries the N6-lactoyllysine; alternate modification. Residue Lys-109 is modified to N6-glutaryllysine; alternate. Lys-109 carries the N6-methyllysine; alternate modification. Residue Ser-113 is glycosylated (O-linked (GlcNAc) serine). Thr-116 bears the Phosphothreonine mark. Residues Lys-117 and Lys-121 each carry the N6-(2-hydroxyisobutyryl)lysine; alternate modification. Lys-117 carries the post-translational modification N6-(beta-hydroxybutyryl)lysine; alternate. An N6-lactoyllysine; alternate mark is found at Lys-117 and Lys-121. Residues Lys-117 and Lys-121 each carry the N6-glutaryllysine; alternate modification. Residues Lys-117 and Lys-121 each carry the N6-succinyllysine; alternate modification. An N6-methylated lysine; alternate modification is found at Lys-117. Lys-121 is covalently cross-linked (Glycyl lysine isopeptide (Lys-Gly) (interchain with G-Cter in ubiquitin); alternate).

This sequence belongs to the histone H2B family. The nucleosome is a histone octamer containing two molecules each of H2A, H2B, H3 and H4 assembled in one H3-H4 heterotetramer and two H2A-H2B heterodimers. The octamer wraps approximately 147 bp of DNA. Monoubiquitination at Lys-35 (H2BK34Ub) by the MSL1/MSL2 dimer is required for histone H3 'Lys-4' (H3K4me) and 'Lys-79' (H3K79me) methylation and transcription activation at specific gene loci, such as HOXA9 and MEIS1 loci. Similarly, monoubiquitination at Lys-121 (H2BK120Ub) by the RNF20/40 complex gives a specific tag for epigenetic transcriptional activation and is also prerequisite for histone H3 'Lys-4' and 'Lys-79' methylation. It also functions cooperatively with the FACT dimer to stimulate elongation by RNA polymerase II. H2BK120Ub also acts as a regulator of mRNA splicing: deubiquitination by USP49 is required for efficient cotranscriptional splicing of a large set of exons. Post-translationally, phosphorylated on Ser-15 (H2BS14ph) by STK4/MST1 during apoptosis; which facilitates apoptotic chromatin condensation. Also phosphorylated on Ser-15 in response to DNA double strand breaks (DSBs), and in correlation with somatic hypermutation and immunoglobulin class-switch recombination. Phosphorylation at Ser-37 (H2BS36ph) by AMPK in response to stress promotes transcription. In terms of processing, glcNAcylation at Ser-113 promotes monoubiquitination of Lys-121. It fluctuates in response to extracellular glucose, and associates with transcribed genes. ADP-ribosylated by PARP1 or PARP2 on Ser-7 (H2BS6ADPr) in response to DNA damage. H2BS6ADPr promotes recruitment of CHD1L. Mono-ADP-ribosylated on Glu-3 (H2BE2ADPr) by PARP3 in response to single-strand breaks. Poly ADP-ribosylation on Glu-36 (H2BE35ADPr) by PARP1 regulates adipogenesis: it inhibits phosphorylation at Ser-37 (H2BS36ph), thereby blocking expression of pro-adipogenetic genes. Post-translationally, crotonylation (Kcr) is specifically present in male germ cells and marks testis-specific genes in post-meiotic cells, including X-linked genes that escape sex chromosome inactivation in haploid cells. Crotonylation marks active promoters and enhancers and confers resistance to transcriptional repressors. It is also associated with post-meiotically activated genes on autosomes. In terms of processing, lactylated in macrophages by EP300/P300 by using lactoyl-CoA directly derived from endogenous or exogenous lactate, leading to stimulates gene transcription.

It localises to the nucleus. The protein localises to the chromosome. Its function is as follows. Core component of nucleosome. Nucleosomes wrap and compact DNA into chromatin, limiting DNA accessibility to the cellular machineries which require DNA as a template. Histones thereby play a central role in transcription regulation, DNA repair, DNA replication and chromosomal stability. DNA accessibility is regulated via a complex set of post-translational modifications of histones, also called histone code, and nucleosome remodeling. The protein is Histone H2B type 1-N (H2BC15) of Bos taurus (Bovine).